The following is a 142-amino-acid chain: Type II secretion system core protein G (142 aa).

A propeptide spans 1–8 (MQRRQQSG) (leader sequence). Phe-9 is subject to N-methylphenylalanine. A helical membrane pass occupies residues 9-29 (FTLIEIMVVVVILGILAALVV). The interval 121–142 (SLGADGKEGGSDNDADIGNWDN) is disordered.

Belongs to the GSP G family. As to quaternary structure, type II secretion system is composed of four main components: the outer membrane complex, the inner membrane complex, the cytoplasmic secretion ATPase and the periplasm-spanning pseudopilus. Forms homomultimers. Interacts with pseudopilin tip ternary complex made of XcpX, XcpU, XcpV and XcpW. Interacts with PilA. Post-translationally, cleaved by the prepilin peptidase. In terms of processing, methylated by prepilin peptidase at the amino group of the N-terminal phenylalanine once the leader sequence is cleaved.

The protein localises to the cell inner membrane. In terms of biological role, core component of the type II secretion system required for the energy-dependent secretion of extracellular factors such as proteases and toxins from the periplasm. Pseudopilin (pilin-like) protein that polymerizes to form the pseudopilus. Further polymerization triggers pseudopilus growth. Type II pseudopilus confers increased bacterial adhesive capabilities. This Pseudomonas aeruginosa (strain ATCC 15692 / DSM 22644 / CIP 104116 / JCM 14847 / LMG 12228 / 1C / PRS 101 / PAO1) protein is Type II secretion system core protein G (xcpT).